A 1202-amino-acid chain; its full sequence is Protein HASTY 1 (1202 aa).

Met-1 carries the post-translational modification N-acetylmethionine.

Belongs to the exportin family. Interacts with RAN1. In terms of tissue distribution, expressed in roots, leaves and floral buds.

The protein resides in the nucleus. Nucleocytoplasmic transporter involved in the nuclear export of microRNAs (miRNAs). Required for several miRNAs accumulation. Specifically required for miR156 accumulation which targets SPL3, SPL4 and SPL5 transcription factors. Involved in plant development through its role in miRNAs processing. Required for vegetative phase change and vegetative to reproductive phase transition. Functionally dependent on RAN1 binding. Does not seem to be involved in small interfering RNAs (siRNAs) processing. This Arabidopsis thaliana (Mouse-ear cress) protein is Protein HASTY 1 (HST1).